Reading from the N-terminus, the 352-residue chain is Guanine nucleotide-binding protein alpha-7 subunit (352 aa).

G2 is lipidated: N-myristoyl glycine. A lipid anchor (S-palmitoyl cysteine) is attached at C4. The 321-residue stretch at 32-352 folds into the G-alpha domain; sequence RIIKLLLLGA…AKNLKSMGLC (321 aa). Positions 35-48 are G1 motif; that stretch reads KLLLLGAGESGKST. GTP contacts are provided by residues 40–47, 174–180, 199–203, 268–271, and A324; these read GAGESGKS, LRTRIKT, DVGGQ, and NKKD. Mg(2+) contacts are provided by S47 and T180. The G2 motif stretch occupies residues 172–180; sequence DLLRTRIKT. The tract at residues 195-204 is G3 motif; that stretch reads FRVIDVGGQR. Residues 264–271 are G4 motif; that stretch reads ILFLNKKD. Positions 322 to 327 are G5 motif; it reads TCATDT.

It belongs to the G-alpha family. G(i/o/t/z) subfamily. As to quaternary structure, g proteins are composed of 3 units; alpha, beta and gamma. The alpha chain contains the guanine nucleotide binding site.

Its function is as follows. Guanine nucleotide-binding proteins (G proteins) are involved as modulators or transducers in various transmembrane signaling systems. The polypeptide is Guanine nucleotide-binding protein alpha-7 subunit (gpa-7) (Caenorhabditis briggsae).